The sequence spans 365 residues: Phospho-N-acetylmuramoyl-pentapeptide-transferase (365 aa).

A run of 10 helical transmembrane segments spans residues 22–42 (YISVRIIMISITSLLITLALG), 74–94 (TMGGVLILSSVIISCLLWGDL), 95–115 (TSIYLWILILVVIFFGAIGFF), 133–153 (YKFALQSIFSIVLAIVLFYLL), 168–188 (SLYIPMGIVIFVVLAFFIING), 201–221 (GLAIVPVVLVAAGLGIYAYIE), 240–260 (LAEVAVFCAAVCGSGLAFLWF), 267–287 (VFMGDVGSLTLGAVLGVIAVM), 292–312 (LIFFIMGLLFVVEALSVMLQV), and 342–362 (KVVIRFWIISLILFLIGLAAI).

It belongs to the glycosyltransferase 4 family. MraY subfamily. Mg(2+) is required as a cofactor.

Its subcellular location is the cell inner membrane. The enzyme catalyses UDP-N-acetyl-alpha-D-muramoyl-L-alanyl-gamma-D-glutamyl-meso-2,6-diaminopimeloyl-D-alanyl-D-alanine + di-trans,octa-cis-undecaprenyl phosphate = di-trans,octa-cis-undecaprenyl diphospho-N-acetyl-alpha-D-muramoyl-L-alanyl-D-glutamyl-meso-2,6-diaminopimeloyl-D-alanyl-D-alanine + UMP. It participates in cell wall biogenesis; peptidoglycan biosynthesis. Its function is as follows. Catalyzes the initial step of the lipid cycle reactions in the biosynthesis of the cell wall peptidoglycan: transfers peptidoglycan precursor phospho-MurNAc-pentapeptide from UDP-MurNAc-pentapeptide onto the lipid carrier undecaprenyl phosphate, yielding undecaprenyl-pyrophosphoryl-MurNAc-pentapeptide, known as lipid I. The protein is Phospho-N-acetylmuramoyl-pentapeptide-transferase of Francisella tularensis subsp. tularensis (strain WY96-3418).